The sequence spans 315 residues: MYEWLNALPKAELHLHLEGSLEPELLFALAERNKIALPWNDVEALRSAYAFNNLQEFLDLYYQGADVLRSEQDFYDLTWAYLQRCKSQNVIHTEPFFDPQTHTDRGIPFEVVLNGINQALKDGREQLGISSGLILSFLRHLSEEEAQKTLDQALPFRDAFIAVGLDSSEKGHPPSKFQRVFDRARSEGFEAVAHAGEEGPPEYIWEALDLLKIKRIDHGVRAIEDERLMQRIIDEQIPLTVCPLSNTKLCVFDHMSQHNILDMLERGVKVTVNSDDPAYFGGYVTENFHALHTHLGMTEDQARRLAQNSLDARLV.

Zn(2+) contacts are provided by H14, H16, and H194. The active-site Proton donor is the E197. D275 is a Zn(2+) binding site. D276 is a substrate binding site.

The protein belongs to the metallo-dependent hydrolases superfamily. Adenosine and AMP deaminases family. Adenine deaminase type 2 subfamily. Zn(2+) is required as a cofactor.

The enzyme catalyses adenine + H2O + H(+) = hypoxanthine + NH4(+). Functionally, catalyzes the hydrolytic deamination of adenine to hypoxanthine. Plays an important role in the purine salvage pathway and in nitrogen catabolism. The sequence is that of Adenine deaminase from Pseudomonas putida (strain W619).